The primary structure comprises 79 residues: Acyl carrier protein (79 aa).

One can recognise a Carrier domain in the interval 2–77 (ENIEQRVKKI…QAIDYVTAHL (76 aa)). At serine 37 the chain carries O-(pantetheine 4'-phosphoryl)serine.

Belongs to the acyl carrier protein (ACP) family. Post-translationally, 4'-phosphopantetheine is transferred from CoA to a specific serine of apo-ACP by AcpS. This modification is essential for activity because fatty acids are bound in thioester linkage to the sulfhydryl of the prosthetic group.

It localises to the cytoplasm. Its pathway is lipid metabolism; fatty acid biosynthesis. Functionally, carrier of the growing fatty acid chain in fatty acid biosynthesis. The sequence is that of Acyl carrier protein from Laribacter hongkongensis (strain HLHK9).